Here is a 296-residue protein sequence, read N- to C-terminus: Sulfotransferase 1C2 (296 aa).

49–54 (KAGTTW) provides a ligand contact to 3'-phosphoadenylyl sulfate. Substrate is bound at residue 107 to 109 (KTH). His109 acts as the Proton acceptor in catalysis. Residues Arg131, Ser139, Tyr194, and 228 to 233 (TSFEKM) contribute to the 3'-phosphoadenylyl sulfate site. At Ser139 the chain carries Phosphoserine. Phosphoserine is present on Ser254. 256-260 (FMRKG) serves as a coordination point for 3'-phosphoadenylyl sulfate.

This sequence belongs to the sulfotransferase 1 family. Found in adult stomach, kidney and thyroid gland, and in fetal kidney and liver.

The protein localises to the cytoplasm. It localises to the lysosome. It is found in the mitochondrion. The enzyme catalyses a phenol + 3'-phosphoadenylyl sulfate = an aryl sulfate + adenosine 3',5'-bisphosphate + H(+). It catalyses the reaction cholesterol + 3'-phosphoadenylyl sulfate = cholesterol sulfate + adenosine 3',5'-bisphosphate + H(+). Functionally, sulfotransferase that utilizes 3'-phospho-5'-adenylyl sulfate (PAPS) to catalyze the sulfate conjugation of phenolic compounds. Does not transfer sulfate to steroids, dopamine, acetaminophen, or alpha-naphthol. Except in mitochondria, where it can add sulfate to cholesterol producing cholesterol sulfate, which alters mitochondrial membrane organization, and impacts protein complex mobility increasing state-III respiration, thereby modulating mitochondrial respiration. Catalyzes the sulfation of the carcinogenic N-hydroxy-2-acetylaminofluorene leading to highly reactive intermediates capable of forming DNA adducts, potentially resulting in mutagenesis. This Homo sapiens (Human) protein is Sulfotransferase 1C2 (SULT1C2).